A 230-amino-acid polypeptide reads, in one-letter code: Transmembrane protein 221 (230 aa).

The next 4 membrane-spanning stretches (helical) occupy residues 12-32 (AMTL…QLLF), 73-93 (ALAA…ALCG), 125-145 (LFCC…LLLF), and 147-167 (IEAG…LVAI). The tract at residues 184 to 230 (RELSPPSFEDEPARPSEDSKSGCRAQPPQDEETETPIGAVTHQGSHF) is disordered. Residues 194-204 (EPARPSEDSKS) show a composition bias toward basic and acidic residues.

It is found in the membrane. This Mus musculus (Mouse) protein is Transmembrane protein 221 (Tmem221).